The chain runs to 335 residues: Dolichyl-diphosphooligosaccharide--protein glycosyltransferase subunit MAGT1 (335 aa).

An N-terminal signal peptide occupies residues 1–29 (MAAGWWFWCVSVTVAVALLIVCDVPSVSA). At 30–184 (QRKKEMVLSE…DVNIRVIRPP (155 aa)) the chain is on the extracellular side. The 129-residue stretch at 47 to 175 (WTNKRPVIRM…IARWIADRTD (129 aa)) folds into the Thioredoxin domain. Asn71 carries N-linked (GlcNAc...) asparagine glycosylation. Cys87 and Cys90 are disulfide-bonded. Residues 185–205 (NYAGPLMLGLLLAVIGGLVYL) form a helical membrane-spanning segment. Topologically, residues 206–209 (RRSN) are cytoplasmic. The helical transmembrane segment at 210 to 230 (MEFLFNKTGWAFAALCFVLAM) threads the bilayer. Residues 231-270 (TSGQMWNHIRGPPYAHKNPHTGHVNYIHGSSQAQFVAETH) are Extracellular-facing. The helical transmembrane segment at 271-291 (IVLLFNGGVTLGMVLLCEAAT) threads the bilayer. The Cytoplasmic segment spans residues 292 to 300 (SDMDIGKRK). The chain crosses the membrane as a helical span at residues 301 to 321 (IMCVAGIGLVVLFFSWMLSIF). The Extracellular segment spans residues 322-335 (RSKYHGYPYSFLMS).

Belongs to the OST3/OST6 family. As to quaternary structure, accessory component of the STT3B-containing form of the oligosaccharyltransferase (OST) complex. OST exists in two different complex forms which contain common core subunits RPN1, RPN2, OST48, OST4, DAD1 and TMEM258, either STT3A or STT3B as catalytic subunits, and form-specific accessory subunits. OST can form stable complexes with the Sec61 complex or with both the Sec61 and TRAP complexes. The association of TUSC3 or MAGT1 with the STT3B-containing complex seems to be mutually exclusvice.

Its subcellular location is the cell membrane. It is found in the endoplasmic reticulum. It localises to the endoplasmic reticulum membrane. Its pathway is protein modification; protein glycosylation. Its function is as follows. Accessory component of the STT3B-containing form of the N-oligosaccharyl transferase (OST) complex which catalyzes the transfer of a high mannose oligosaccharide from a lipid-linked oligosaccharide donor to an asparagine residue within an Asn-X-Ser/Thr consensus motif in nascent polypeptide chains. Involved in N-glycosylation of STT3B-dependent substrates. Specifically required for the glycosylation of a subset of acceptor sites that are near cysteine residues; in this function seems to act redundantly with TUSC3. In its oxidized form proposed to form transient mixed disulfides with a glycoprotein substrate to facilitate access of STT3B to the unmodified acceptor site. Also has oxidoreductase-independent functions in the STT3B-containing OST complex possibly involving substrate recognition. Could indirectly play a role in Mg(2+) transport in epithelial cells. The polypeptide is Dolichyl-diphosphooligosaccharide--protein glycosyltransferase subunit MAGT1 (Pongo abelii (Sumatran orangutan)).